Reading from the N-terminus, the 554-residue chain is DNA gyrase subunit A (554 aa).

In terms of domain architecture, Topo IIA-type catalytic spans 1 to 554; it reads RGIFRPDRSH…GMATNIPPHN (554 aa). The O-(5'-phospho-DNA)-tyrosine intermediate role is filled by Tyr69. Residues 195–335 form the DOD-type homing endonuclease domain; it reads HLGAFISEGF…IQQMLLEFGV (141 aa).

The protein belongs to the type II topoisomerase GyrA/ParC subunit family. Heterotetramer, composed of two GyrA and two GyrB chains. In the heterotetramer, GyrA contains the active site tyrosine that forms a transient covalent intermediate with DNA, while GyrB binds cofactors and catalyzes ATP hydrolysis. In terms of processing, this protein undergoes a protein self splicing that involves a post-translational excision of the intervening region (intein) followed by peptide ligation.

The protein resides in the cytoplasm. The catalysed reaction is ATP-dependent breakage, passage and rejoining of double-stranded DNA.. A type II topoisomerase that negatively supercoils closed circular double-stranded (ds) DNA in an ATP-dependent manner to modulate DNA topology and maintain chromosomes in an underwound state. Negative supercoiling favors strand separation, and DNA replication, transcription, recombination and repair, all of which involve strand separation. Also able to catalyze the interconversion of other topological isomers of dsDNA rings, including catenanes and knotted rings. Type II topoisomerases break and join 2 DNA strands simultaneously in an ATP-dependent manner. The chain is DNA gyrase subunit A (gyrA) from Mycolicibacterium flavescens (Mycobacterium flavescens).